A 161-amino-acid chain; its full sequence is uncharacterized protein (161 aa).

This is an uncharacterized protein from Methanocaldococcus jannaschii (strain ATCC 43067 / DSM 2661 / JAL-1 / JCM 10045 / NBRC 100440) (Methanococcus jannaschii).